The sequence spans 654 residues: Periplasmic beta-glucosidase/beta-xylosidase (654 aa).

The N-terminal stretch at 1-25 (MEKSATRQKALLIALPLLFSPLASA) is a signal peptide. Residues aspartate 235 and aspartate 360 contribute to the active site.

This sequence belongs to the glycosyl hydrolase 3 family.

Its subcellular location is the periplasm. The catalysed reaction is Hydrolysis of terminal, non-reducing beta-D-glucosyl residues with release of beta-D-glucose.. It catalyses the reaction Hydrolysis of (1-&gt;4)-beta-D-xylans, to remove successive D-xylose residues from the non-reducing termini.. Functionally, exhibits both beta-glucosidase and beta-xylosidase activities. The protein is Periplasmic beta-glucosidase/beta-xylosidase (bgxA) of Dickeya chrysanthemi (Pectobacterium chrysanthemi).